Consider the following 110-residue polypeptide: Cytochrome bo(3) ubiquinol oxidase subunit 4 (110 aa).

Residues 1 to 18 (MANAHDTHHEGNHGSVKS) lie on the Cytoplasmic side of the membrane. A helical transmembrane segment spans residues 19–39 (YMIGFILSIILTAIPFGLAMS). Residues 40 to 46 (PSLPKNL) lie on the Periplasmic side of the membrane. Residues 47-67 (TVLIIVAMAVIQVVVHLVYFL) form a helical membrane-spanning segment. Over 68-78 (HMDRSKEQRNN) the chain is Cytoplasmic. A helical transmembrane segment spans residues 79 to 99 (VWTFLFTTLVIALLVGLSLWI). The Periplasmic portion of the chain corresponds to 100–110 (MFSIHFEMLAK).

This sequence belongs to the cytochrome c oxidase bacterial subunit 4 family. As to quaternary structure, heterooctamer of two A chains, two B chains, two C chains and two D chains.

The protein resides in the cell inner membrane. Functionally, cytochrome bo(3) ubiquinol terminal oxidase is the component of the aerobic respiratory chain of E.coli that predominates when cells are grown at high aeration. Has proton pump activity across the membrane in addition to electron transfer, pumping 2 protons/electron. This is Cytochrome bo(3) ubiquinol oxidase subunit 4 (cyoD) from Pseudomonas putida (Arthrobacter siderocapsulatus).